A 939-amino-acid polypeptide reads, in one-letter code: Isoleucine--tRNA ligase (939 aa).

The 'HIGH' region motif lies at 57–67 (PYANGEIHIGH). L-isoleucyl-5'-AMP is bound at residue Glu563. The 'KMSKS' region motif lies at 604–608 (KMSKS). Lys607 is a binding site for ATP. Zn(2+) is bound by residues Cys902, Cys905, Cys922, and Cys925.

This sequence belongs to the class-I aminoacyl-tRNA synthetase family. IleS type 1 subfamily. As to quaternary structure, monomer. The cofactor is Zn(2+).

The protein localises to the cytoplasm. The enzyme catalyses tRNA(Ile) + L-isoleucine + ATP = L-isoleucyl-tRNA(Ile) + AMP + diphosphate. In terms of biological role, catalyzes the attachment of isoleucine to tRNA(Ile). As IleRS can inadvertently accommodate and process structurally similar amino acids such as valine, to avoid such errors it has two additional distinct tRNA(Ile)-dependent editing activities. One activity is designated as 'pretransfer' editing and involves the hydrolysis of activated Val-AMP. The other activity is designated 'posttransfer' editing and involves deacylation of mischarged Val-tRNA(Ile). The polypeptide is Isoleucine--tRNA ligase (Methylococcus capsulatus (strain ATCC 33009 / NCIMB 11132 / Bath)).